The chain runs to 156 residues: Ribosomal RNA large subunit methyltransferase H (156 aa).

S-adenosyl-L-methionine-binding positions include L73, G104, and 123 to 128 (LSPLTL).

This sequence belongs to the RNA methyltransferase RlmH family. In terms of assembly, homodimer.

It localises to the cytoplasm. The enzyme catalyses pseudouridine(1915) in 23S rRNA + S-adenosyl-L-methionine = N(3)-methylpseudouridine(1915) in 23S rRNA + S-adenosyl-L-homocysteine + H(+). In terms of biological role, specifically methylates the pseudouridine at position 1915 (m3Psi1915) in 23S rRNA. This chain is Ribosomal RNA large subunit methyltransferase H, found in Photobacterium profundum (strain SS9).